The chain runs to 417 residues: MKRVAVLSVHTSPLEQPGTGDAGGMNVYVVQTATAMARRGVEVEIFTRATSSELPPVAELAPGVKVRHVVAGPFSGLEKEELPGQLCAFTAGVLRAEARHEPGHYDVVHSHYWLSGQVGWLARERWGVPLVHTAHTLAKVKNLALADSDAPEPRMRVIGEEQVVAEADRLIANTDVEADQLTGLYAADPAKVLVVPPGVDLGRFTPGDRGEARRSLGLAPDALVLAFVGRIQPLKAPDVLVRATAALLERDPGLRSRLVVLVVGGPSGSGMRTPDELVGLARSLGVADVVRFLPPQGGGSLAQVYRAADAVAVPSHNESFGLVALEAQACGTPVVAAAVGGLPVAVRDGVTGLLVAGHRTSDWADALSRIALAPGLREALAGNAVGHARGFSWDRTTESLLAAYGQARDVFREEVYA.

His10 contributes to the 1D-myo-inositol 3-phosphate binding site. Residues 16-17 and Gly24 each bind UDP-N-acetyl-alpha-D-glucosamine; that span reads QP. 1D-myo-inositol 3-phosphate is bound by residues 21–26, Lys79, Tyr112, Thr136, and Arg156; that span reads DAGGMN. Residues Arg230, Lys235, and Gln296 each coordinate UDP-N-acetyl-alpha-D-glucosamine. Residues Tyr305, Arg306, and Ala308 each coordinate Mg(2+). Glu318 and Glu326 together coordinate UDP-N-acetyl-alpha-D-glucosamine. A Mg(2+)-binding site is contributed by Thr332.

This sequence belongs to the glycosyltransferase group 1 family. MshA subfamily. As to quaternary structure, homodimer.

It catalyses the reaction 1D-myo-inositol 3-phosphate + UDP-N-acetyl-alpha-D-glucosamine = 1D-myo-inositol 2-acetamido-2-deoxy-alpha-D-glucopyranoside 3-phosphate + UDP + H(+). In terms of biological role, catalyzes the transfer of a N-acetyl-glucosamine moiety to 1D-myo-inositol 3-phosphate to produce 1D-myo-inositol 2-acetamido-2-deoxy-glucopyranoside 3-phosphate in the mycothiol biosynthesis pathway. The protein is D-inositol 3-phosphate glycosyltransferase of Actinosynnema mirum (strain ATCC 29888 / DSM 43827 / JCM 3225 / NBRC 14064 / NCIMB 13271 / NRRL B-12336 / IMRU 3971 / 101).